The primary structure comprises 321 residues: Sideroflexin-1-3 (321 aa).

5 helical membrane passes run 101-121 (IITG…FWQW), 146-168 (LVTS…NHAV), 174-194 (LLGR…NIPC), 220-240 (AAVV…IPGM), and 266-286 (IQTL…CAFF).

Belongs to the sideroflexin family.

Its subcellular location is the mitochondrion membrane. Functionally, mitochondrial amino-acid transporter that mediates transport of serine into mitochondria. The chain is Sideroflexin-1-3 from Drosophila melanogaster (Fruit fly).